A 384-amino-acid polypeptide reads, in one-letter code: Dual specificity protein phosphatase 5 (384 aa).

Positions alanine 19 to valine 141 constitute a Rhodanese domain. A Nuclear localization signal motif is present at residues arginine 53–arginine 74. In terms of domain architecture, Tyrosine-protein phosphatase spans glycine 178 to proline 319. Cysteine 263 functions as the Phosphocysteine intermediate in the catalytic mechanism.

This sequence belongs to the protein-tyrosine phosphatase family. Non-receptor class dual specificity subfamily.

It is found in the nucleus. It carries out the reaction O-phospho-L-tyrosyl-[protein] + H2O = L-tyrosyl-[protein] + phosphate. The catalysed reaction is O-phospho-L-seryl-[protein] + H2O = L-seryl-[protein] + phosphate. It catalyses the reaction O-phospho-L-threonyl-[protein] + H2O = L-threonyl-[protein] + phosphate. Its function is as follows. Dual specificity protein phosphatase; active with phosphotyrosine, phosphoserine and phosphothreonine residues. The highest relative activity is toward ERK1. The sequence is that of Dual specificity protein phosphatase 5 (Dusp5) from Rattus norvegicus (Rat).